Consider the following 67-residue polypeptide: Probable pilin MJ1400 (67 aa).

The propeptide occupies 1–13; it reads MKFIMKFIKSNKG. Positions 14–22 match the QXSXEXXXL motif; the sequence is QISLEFSLL.

Post-translationally, the N-terminus is cleaved by the prepilin peptidase EppA, which recognizes the class III signal sequence.

The protein localises to the secreted. The protein resides in the cell surface. It is found in the fimbrium. The chain is Probable pilin MJ1400 from Methanocaldococcus jannaschii (strain ATCC 43067 / DSM 2661 / JAL-1 / JCM 10045 / NBRC 100440) (Methanococcus jannaschii).